The primary structure comprises 202 residues: MIEYLKGAIVGLTPTNLVIECAGVGYDVNVSLTTYSAYQGKKEGLIWITQLIREDAHLLYGFSTKEERTLFGQLTSVSGVGPTTAQLILSSYAPQELAALITTGQADALKAVKGIGLKTAQRIIVDLKGKIQLETSSDEILSARTAVGDAALNTIASGEEAISALKMLGFADPAIRKAVKSILSEDSSLAVEDIIKRALRML.

Residues 1–63 (MIEYLKGAIV…EDAHLLYGFS (63 aa)) are domain I. The domain II stretch occupies residues 64–142 (TKEERTLFGQ…LETSSDEILS (79 aa)). The tract at residues 143–153 (ARTAVGDAALN) is flexible linker. The segment at 153–202 (NTIASGEEAISALKMLGFADPAIRKAVKSILSEDSSLAVEDIIKRALRML) is domain III.

The protein belongs to the RuvA family. As to quaternary structure, homotetramer. Forms an RuvA(8)-RuvB(12)-Holliday junction (HJ) complex. HJ DNA is sandwiched between 2 RuvA tetramers; dsDNA enters through RuvA and exits via RuvB. An RuvB hexamer assembles on each DNA strand where it exits the tetramer. Each RuvB hexamer is contacted by two RuvA subunits (via domain III) on 2 adjacent RuvB subunits; this complex drives branch migration. In the full resolvosome a probable DNA-RuvA(4)-RuvB(12)-RuvC(2) complex forms which resolves the HJ.

Its subcellular location is the cytoplasm. In terms of biological role, the RuvA-RuvB-RuvC complex processes Holliday junction (HJ) DNA during genetic recombination and DNA repair, while the RuvA-RuvB complex plays an important role in the rescue of blocked DNA replication forks via replication fork reversal (RFR). RuvA specifically binds to HJ cruciform DNA, conferring on it an open structure. The RuvB hexamer acts as an ATP-dependent pump, pulling dsDNA into and through the RuvAB complex. HJ branch migration allows RuvC to scan DNA until it finds its consensus sequence, where it cleaves and resolves the cruciform DNA. This chain is Holliday junction branch migration complex subunit RuvA, found in Porphyromonas gingivalis (strain ATCC BAA-308 / W83).